Reading from the N-terminus, the 268-residue chain is Tryptophan synthase alpha chain (268 aa).

Catalysis depends on proton acceptor residues Glu49 and Asp60.

It belongs to the TrpA family. Tetramer of two alpha and two beta chains.

It catalyses the reaction (1S,2R)-1-C-(indol-3-yl)glycerol 3-phosphate + L-serine = D-glyceraldehyde 3-phosphate + L-tryptophan + H2O. It participates in amino-acid biosynthesis; L-tryptophan biosynthesis; L-tryptophan from chorismate: step 5/5. Its function is as follows. The alpha subunit is responsible for the aldol cleavage of indoleglycerol phosphate to indole and glyceraldehyde 3-phosphate. The sequence is that of Tryptophan synthase alpha chain from Pseudomonas aeruginosa (strain ATCC 15692 / DSM 22644 / CIP 104116 / JCM 14847 / LMG 12228 / 1C / PRS 101 / PAO1).